We begin with the raw amino-acid sequence, 432 residues long: Trigger factor (432 aa).

The 86-residue stretch at E161–P246 folds into the PPIase FKBP-type domain.

It belongs to the FKBP-type PPIase family. Tig subfamily. In terms of assembly, homodimer and monomer. In vivo most of the ribosomes are in complex with monomeric TF. Uncomplexed TF, however, is in a monomer-dimer equilibrium with approximately two thirds of TF existing in a dimeric state.

Its subcellular location is the cytoplasm. It catalyses the reaction [protein]-peptidylproline (omega=180) = [protein]-peptidylproline (omega=0). In terms of biological role, involved in protein export. Acts as a chaperone by maintaining the newly synthesized protein in an open conformation. Functions as a peptidyl-prolyl cis-trans isomerase. This Shigella dysenteriae serotype 1 (strain Sd197) protein is Trigger factor.